Reading from the N-terminus, the 354-residue chain is Clavesin-1 (354 aa).

In terms of domain architecture, CRAL-TRIO spans 118-279; that stretch reads IKRALIDGFP…EFGGTLPPYD (162 aa). The interval 317 to 354 is disordered; sequence RECSPKPMKRSQSVVEAGTLKHEEKGENENTQPLLALD. Over residues 335–344 the composition is skewed to basic and acidic residues; that stretch reads TLKHEEKGEN. A compositionally biased stretch (polar residues) spans 345–354; that stretch reads ENTQPLLALD.

Forms a complex with clathrin heavy chain and gamma-adaptin. In terms of tissue distribution, expressed in brain with no expression detected in non-neuronal tissues (at protein level).

Its subcellular location is the golgi apparatus. The protein resides in the trans-Golgi network membrane. It localises to the early endosome membrane. The protein localises to the cytoplasmic vesicle. It is found in the clathrin-coated vesicle. Its function is as follows. Required for normal morphology of late endosomes and/or lysosomes in neurons. Binds phosphatidylinositol 3,5-bisphosphate (PtdIns(3,5)P2). The chain is Clavesin-1 from Rattus norvegicus (Rat).